A 64-amino-acid chain; its full sequence is Putative antitoxin AF_1074 (64 aa).

Belongs to the UPF0165 family.

In terms of biological role, possibly the antitoxin component of a type II toxin-antitoxin (TA) system. The polypeptide is Putative antitoxin AF_1074 (Archaeoglobus fulgidus (strain ATCC 49558 / DSM 4304 / JCM 9628 / NBRC 100126 / VC-16)).